We begin with the raw amino-acid sequence, 277 residues long: Putative endonuclease (277 aa).

Functionally, putative endonuclease. This is Putative endonuclease from Escherichia coli (Enterobacteria phage T5).